We begin with the raw amino-acid sequence, 92 residues long: Large ribosomal subunit protein eL42 (92 aa).

Zn(2+)-binding residues include C11, C14, C70, and C73. The C4-type zinc-finger motif lies at 11 to 73; it reads CPNCRKHTVH…LDLRLKCKEC (63 aa).

Belongs to the eukaryotic ribosomal protein eL42 family. In terms of assembly, part of the 50S ribosomal subunit. Zn(2+) is required as a cofactor.

In terms of biological role, binds to the 23S rRNA. The protein is Large ribosomal subunit protein eL42 of Methanothermobacter thermautotrophicus (strain ATCC 29096 / DSM 1053 / JCM 10044 / NBRC 100330 / Delta H) (Methanobacterium thermoautotrophicum).